The following is an 800-amino-acid chain: Phosphoinositide 3-kinase adapter protein 1 (800 aa).

A TIR domain is found at 8 to 145 (GGYDVLILYA…AVKKAISEDS (138 aa)). Residues 10–144 (YDVLILYASD…EAVKKAISED (135 aa)) are necessary and sufficient to mediate inhibition of NF-kappa-B downstream of activated TLRs. Residues 185-321 (VQPDHIRCGV…NIPASGLHLF (137 aa)) enclose the DBB domain. A Phosphotyrosine modification is found at Tyr266. Residues Tyr423, Tyr448, and Tyr463 each carry the phosphotyrosine; by SYK modification. The interval 527-548 (EMASRPPVPVPRPESSSPQPDN) is disordered. Residues 643–663 (QQENLKRLRDSITRRQMEKQK) adopt a coiled-coil conformation. Residues 702–713 (PKKELKRGDWKT) are compositionally biased toward basic and acidic residues. Residues 702-800 (PKKELKRGDW…YPPPVPPRGR (99 aa)) are disordered. The segment covering 714–737 (ESTSSTTSSASNRSSTRSILSVSS) has biased composition (low complexity). Residues 749–759 (SEASRSRSPIP) show a composition bias toward polar residues. 2 stretches are compositionally biased toward pro residues: residues 767–777 (LPLPERPPRVP) and 791–800 (YPPPVPPRGR).

Homooligomer. Interacts (phosphorylated on tyrosine residues within YXXM motifs) with PIK3R1 (via SH2 domain); required for BCR- and TLR-mediated activation of phosphoinositide 3-kinase. Constitutively phosphorylated. Phosphorylated on tyrosine residues within the YXXM motifs by BTK and SYK. Isoform 1 and isoform 2 are phosphorylated on tyrosine residues, most likely within the YXXM motifs, via CD19 activation.

It is found in the cytoplasm. The protein resides in the cell membrane. Functionally, signaling adapter that contributes to B-cell development by linking B-cell receptor (BCR) signaling to the phosphoinositide 3-kinase (PI3K)-Akt signaling pathway. Has a complementary role to the BCR coreceptor CD19, coupling BCR and PI3K activation by providing a docking site for the PI3K subunit PIK3R1. Alternatively, links Toll-like receptor (TLR) signaling to PI3K activation, a process preventing excessive inflammatory cytokine production. Also involved in the activation of PI3K in natural killer cells. May be involved in the survival of mature B-cells via activation of REL. The protein is Phosphoinositide 3-kinase adapter protein 1 (PIK3AP1) of Gallus gallus (Chicken).